The chain runs to 186 residues: Protein FAM219A (186 aa).

Disordered stretches follow at residues 1–47 (MMEE…NYKP) and 59–132 (ELAR…GYSS). Residues 67–81 (KNGTVGSPVNQQPKK) show a composition bias toward polar residues. The segment covering 123 to 132 (SRYSSSGYSS) has biased composition (low complexity).

This sequence belongs to the FAM219 family.

The polypeptide is Protein FAM219A (fam219a) (Danio rerio (Zebrafish)).